The chain runs to 198 residues: NAD(P)H dehydrogenase (quinone) (198 aa).

The Flavodoxin-like domain occupies 4 to 189; the sequence is VLVLYYSMYG…ALARYQGRHV (186 aa). FMN contacts are provided by residues 10–15 and 78–80; these read SMYGHV and TRF. Y12 contacts NAD(+). W98 provides a ligand contact to substrate. FMN is bound by residues 113 to 118 and H133; that span reads STGTGG.

Belongs to the WrbA family. The cofactor is FMN.

The enzyme catalyses a quinone + NADH + H(+) = a quinol + NAD(+). It carries out the reaction a quinone + NADPH + H(+) = a quinol + NADP(+). The polypeptide is NAD(P)H dehydrogenase (quinone) (Halorhodospira halophila (strain DSM 244 / SL1) (Ectothiorhodospira halophila (strain DSM 244 / SL1))).